The chain runs to 67 residues: Conotoxin VnMMSK-02 (67 aa).

An N-terminal signal peptide occupies residues 1–20; it reads MMSKLGALLTICLLLFPLTA. A propeptide spanning residues 21-52 is cleaved from the precursor; the sequence is LPLDGDQPADRPAERMQDDISSEQHPLFDKER. Gln53 bears the Pyrrolidone carboxylic acid mark. 3 disulfide bridges follow: Cys54-Cys66, Cys55-Cys62, and Cys59-Cys65. At Pro64 the chain carries 4-hydroxyproline. A Cysteine amide modification is found at Cys66.

This sequence belongs to the conotoxin M superfamily. As to expression, expressed by the venom duct.

The protein resides in the secreted. The polypeptide is Conotoxin VnMMSK-02 (Conus ventricosus (Mediterranean cone)).